The following is a 508-amino-acid chain: ATP synthase subunit alpha (508 aa).

Residue glycine 171 to threonine 178 participates in ATP binding.

Belongs to the ATPase alpha/beta chains family. In terms of assembly, F-type ATPases have 2 components, CF(1) - the catalytic core - and CF(0) - the membrane proton channel. CF(1) has five subunits: alpha(3), beta(3), gamma(1), delta(1), epsilon(1). CF(0) has three main subunits: a(1), b(2) and c(9-12). The alpha and beta chains form an alternating ring which encloses part of the gamma chain. CF(1) is attached to CF(0) by a central stalk formed by the gamma and epsilon chains, while a peripheral stalk is formed by the delta and b chains.

The protein localises to the cell membrane. It catalyses the reaction ATP + H2O + 4 H(+)(in) = ADP + phosphate + 5 H(+)(out). Produces ATP from ADP in the presence of a proton gradient across the membrane. The alpha chain is a regulatory subunit. The protein is ATP synthase subunit alpha of Protochlamydia amoebophila (strain UWE25).